The sequence spans 305 residues: tRNA pseudouridine synthase B (305 aa).

Residue aspartate 48 is the Nucleophile of the active site.

Belongs to the pseudouridine synthase TruB family. Type 1 subfamily.

It carries out the reaction uridine(55) in tRNA = pseudouridine(55) in tRNA. In terms of biological role, responsible for synthesis of pseudouridine from uracil-55 in the psi GC loop of transfer RNAs. The polypeptide is tRNA pseudouridine synthase B (Pseudomonas putida (strain GB-1)).